A 542-amino-acid chain; its full sequence is Sensory neuron membrane protein 2 (542 aa).

Residues methionine 1–valine 487 lie on the Extracellular side of the membrane. N-linked (GlcNAc...) asparagine glycosylation is found at asparagine 33, asparagine 128, asparagine 238, and asparagine 274. 3 cysteine pairs are disulfide-bonded: cysteine 283-cysteine 351, cysteine 312-cysteine 378, and cysteine 353-cysteine 367. Residues glutamine 488–isoleucine 508 traverse the membrane as a helical segment. Over lysine 509–lysine 542 the chain is Cytoplasmic.

It belongs to the CD36 family. As to expression, detected in the antenna, legs and wings. Higher levels of expression detected in male compared to female.

Its subcellular location is the cell membrane. In terms of biological role, plays an olfactory role that is not restricted to pheromone sensitivity. The polypeptide is Sensory neuron membrane protein 2 (Aedes aegypti (Yellowfever mosquito)).